A 292-amino-acid polypeptide reads, in one-letter code: GTP cyclohydrolase FolE2 (292 aa).

It belongs to the GTP cyclohydrolase IV family.

It catalyses the reaction GTP + H2O = 7,8-dihydroneopterin 3'-triphosphate + formate + H(+). It functions in the pathway cofactor biosynthesis; 7,8-dihydroneopterin triphosphate biosynthesis; 7,8-dihydroneopterin triphosphate from GTP: step 1/1. Functionally, converts GTP to 7,8-dihydroneopterin triphosphate. This is GTP cyclohydrolase FolE2 from Staphylococcus saprophyticus subsp. saprophyticus (strain ATCC 15305 / DSM 20229 / NCIMB 8711 / NCTC 7292 / S-41).